Reading from the N-terminus, the 375-residue chain is Probable UDP-N-acetylglucosamine 2-epimerase (375 aa).

This sequence belongs to the UDP-N-acetylglucosamine 2-epimerase family.

It is found in the cytoplasm. It catalyses the reaction UDP-N-acetyl-alpha-D-glucosamine = UDP-N-acetyl-alpha-D-mannosamine. The protein operates within glycan metabolism; exopolysaccharide EPS I biosynthesis. Functionally, may be involved in synthesis of N-acetyltrideoxygalactose, a component of exopolysaccharide EPS I which functions as a virulence factor. The chain is Probable UDP-N-acetylglucosamine 2-epimerase (epsC) from Ralstonia nicotianae (strain ATCC BAA-1114 / GMI1000) (Ralstonia solanacearum).